The chain runs to 363 residues: GTPase Obg (363 aa).

Residues 1–159 (MKFVDEAFID…KSLKLELKVL (159 aa)) form the Obg domain. Positions 160–341 (ADVGLLGRPN…LVHAIFGHVQ (182 aa)) constitute an OBG-type G domain. Residues 166 to 173 (GRPNAGKS), 191 to 195 (FTTLH), 213 to 216 (DIPG), 291 to 294 (NKLD), and 322 to 324 (SAL) contribute to the GTP site. Residues Ser173 and Thr193 each contribute to the Mg(2+) site. Residues 343–363 (GQRMDNEPPPLDPRFASAGPA) are disordered.

The protein belongs to the TRAFAC class OBG-HflX-like GTPase superfamily. OBG GTPase family. Monomer. The cofactor is Mg(2+).

Its subcellular location is the cytoplasm. In terms of biological role, an essential GTPase which binds GTP, GDP and possibly (p)ppGpp with moderate affinity, with high nucleotide exchange rates and a fairly low GTP hydrolysis rate. Plays a role in control of the cell cycle, stress response, ribosome biogenesis and in those bacteria that undergo differentiation, in morphogenesis control. This Verminephrobacter eiseniae (strain EF01-2) protein is GTPase Obg.